The following is a 772-amino-acid chain: Heat shock protein 88 (772 aa).

Disordered regions lie at residues 496 to 519 (TAAP…AEEK) and 729 to 772 (LGKP…DILD). A compositionally biased stretch (low complexity) spans 497–513 (AAPAETPAETPANGEAA). A compositionally biased stretch (basic and acidic residues) spans 735 to 772 (KPVEVPKEEPKDTPMESKDAPAEEPVATKDQKMDDILD).

The protein belongs to the heat shock protein 70 family.

Its function is as follows. May function in protein folding and assembly, and disassembly of protein complexes. The chain is Heat shock protein 88 (hspH) from Dictyostelium discoideum (Social amoeba).